Consider the following 515-residue polypeptide: Penton protein (515 aa).

A disordered region spans residues 1-25; the sequence is MYRSLRPPTSIPPPPPSGPSPYPAM. Pro residues predominate over residues 9 to 22; sequence TSIPPPPPSGPSPY.

Belongs to the adenoviridae penton family. In terms of assembly, interacts with the fiber protein (via N-terminal tail region). Interacts with the capsid vertex protein; this interaction binds the penton base to neighboring peripentonal hexons.

Its subcellular location is the virion. The protein localises to the host nucleus. Its function is as follows. Major capsid protein that self-associates to form penton base pentamers, each in the shape of a pentagon, situated at the 12 vertices of the pseudo T=25 capsid. Involved in virus secondary attachment to host cell after initial attachment by the fiber protein, and in endocytosis of virions. As the virus enters the host cell, penton proteins are shed concomitant with virion acidification in the endosome. The protein is Penton protein of Galliformes (FAdV-1).